The following is a 193-amino-acid chain: AP-3 complex subunit sigma-1 (193 aa).

Phosphoserine is present on S191.

The protein belongs to the adaptor complexes small subunit family. In terms of assembly, adaptor protein complex 3 (AP-3) is a heterotetramer composed of two large adaptins (delta-type subunit AP3D1 and beta-type subunit AP3B1 or AP3B2), a medium adaptin (mu-type subunit AP3M1 or AP3M2) and a small adaptin (sigma-type subunit APS1 or AP3S2). Interacts with AGAP1. AP-3 associates with the BLOC-1 complex.

It localises to the golgi apparatus. It is found in the cytoplasmic vesicle membrane. Its function is as follows. Part of the AP-3 complex, an adaptor-related complex which is not clathrin-associated. The complex is associated with the Golgi region as well as more peripheral structures. It facilitates the budding of vesicles from the Golgi membrane and may be directly involved in trafficking to lysosomes. In concert with the BLOC-1 complex, AP-3 is required to target cargos into vesicles assembled at cell bodies for delivery into neurites and nerve terminals. This chain is AP-3 complex subunit sigma-1 (AP3S1), found in Bos taurus (Bovine).